Here is a 336-residue protein sequence, read N- to C-terminus: Alcohol dehydrogenase (336 aa).

Cys-37, His-58, Cys-89, Cys-92, Cys-95, Cys-103, and Cys-145 together coordinate Zn(2+).

This sequence belongs to the zinc-containing alcohol dehydrogenase family. Zn(2+) is required as a cofactor.

It carries out the reaction a primary alcohol + NAD(+) = an aldehyde + NADH + H(+). It catalyses the reaction a secondary alcohol + NAD(+) = a ketone + NADH + H(+). The sequence is that of Alcohol dehydrogenase (adh) from Staphylococcus aureus (strain Mu50 / ATCC 700699).